The following is a 71-amino-acid chain: Large ribosomal subunit protein uL29 (71 aa).

The protein belongs to the universal ribosomal protein uL29 family.

The chain is Large ribosomal subunit protein uL29 from Methanococcus maripaludis (strain C7 / ATCC BAA-1331).